A 321-amino-acid chain; its full sequence is Ornithine carbamoyltransferase (321 aa).

Residues 53-56, Q80, R104, and 131-134 contribute to the carbamoyl phosphate site; these read STRT and HPCQ. L-ornithine is bound by residues N166, D230, and 234–235; that span reads SM. Residues 270–271 and R298 each bind carbamoyl phosphate; that span reads CL.

The protein belongs to the aspartate/ornithine carbamoyltransferase superfamily. OTCase family.

The protein localises to the cytoplasm. The enzyme catalyses carbamoyl phosphate + L-ornithine = L-citrulline + phosphate + H(+). Its pathway is amino-acid degradation; L-arginine degradation via ADI pathway; carbamoyl phosphate from L-arginine: step 2/2. Its function is as follows. Reversibly catalyzes the transfer of the carbamoyl group from carbamoyl phosphate (CP) to the N(epsilon) atom of ornithine (ORN) to produce L-citrulline. This is Ornithine carbamoyltransferase from Bifidobacterium longum subsp. infantis (strain ATCC 15697 / DSM 20088 / JCM 1222 / NCTC 11817 / S12).